Here is a 285-residue protein sequence, read N- to C-terminus: MEMILITGMSGSGKSVALHALEDAGYYCVDNLPPELLSSFVALKRPHNAPKLAIAMDVRSATSLPLVPEQLRELKAQGMAVQSLFLDANTDTLVRRFSETRRLHPLSRIDATDQHRALVDAIELERNLLGDMREQAHVIDTSMIRAAQLQGYVKSLLQNPSRQLTLVFESFAFKRGVPLDADYVFDVRMLPNPHYEADLRHQTGLDQPVADFLKAHSEVDDMFRHIEQFLSHWLQALVRDHRSYVTVAVGCTGGQHRSVYLVEALAAAFGKDWPTLKRHRELEAG.

8–15 (GMSGSGKS) serves as a coordination point for ATP. 57-60 (DVRS) contributes to the GTP binding site.

Belongs to the RapZ-like family.

Its function is as follows. Displays ATPase and GTPase activities. The polypeptide is Nucleotide-binding protein Pnap_0906 (Polaromonas naphthalenivorans (strain CJ2)).